The primary structure comprises 275 residues: NAC domain-containing protein 2 (275 aa).

The 153-residue stretch at 10 to 162 (LPPGFRFHPT…DWVLCRIYKK (153 aa)) folds into the NAC domain. A DNA-binding region spans residues 107–168 (VGIKKALVFY…IYKKKNLERA (62 aa)).

As to expression, expressed in roots, stem, flowers, and leaves.

Its subcellular location is the nucleus. Transcription factor that binds DNA motifs 5'-CGT[AG](5N)NACG[ACT][AC][AT][ACG][ACT]-3' and 5'-CACG[ACT][AC][AT][AGT][CT]-3' in target genes promoters. Promotes leaf senescence (developmental, light-induced and ABA-induced senescence) and regulates fruit yield and sugar content, probably by establishing abscisic acid (ABA) homeostasis. Activates the expression of senescence and ABA associated genes including NCED1, ABCG40, CYP707A2, SAG113, SGR1 and PAO, by directly binding to their promoters. The sequence is that of NAC domain-containing protein 2 from Solanum lycopersicum (Tomato).